The following is a 272-amino-acid chain: Shikimate dehydrogenase (NADP(+)) (272 aa).

Residues 14 to 16 (SKS) and Thr61 each bind shikimate. Catalysis depends on Lys65, which acts as the Proton acceptor. Position 77 (Glu77) interacts with NADP(+). The shikimate site is built by Asn86 and Asp102. NADP(+) is bound by residues 126-130 (GAGGA), 149-154 (NRTYSR), and Met213. Tyr215 is a shikimate binding site. Gly237 is an NADP(+) binding site.

Belongs to the shikimate dehydrogenase family. Homodimer.

The enzyme catalyses shikimate + NADP(+) = 3-dehydroshikimate + NADPH + H(+). Its pathway is metabolic intermediate biosynthesis; chorismate biosynthesis; chorismate from D-erythrose 4-phosphate and phosphoenolpyruvate: step 4/7. Functionally, involved in the biosynthesis of the chorismate, which leads to the biosynthesis of aromatic amino acids. Catalyzes the reversible NADPH linked reduction of 3-dehydroshikimate (DHSA) to yield shikimate (SA). This Enterobacter sp. (strain 638) protein is Shikimate dehydrogenase (NADP(+)).